The chain runs to 189 residues: dCTP deaminase (189 aa).

Residues 112 to 117 (KSTYAR), 136 to 138 (TLE), glutamine 157, tyrosine 171, and glutamine 181 contribute to the dCTP site. Glutamate 138 (proton donor/acceptor) is an active-site residue.

This sequence belongs to the dCTP deaminase family. In terms of assembly, homotrimer.

It catalyses the reaction dCTP + H2O + H(+) = dUTP + NH4(+). It participates in pyrimidine metabolism; dUMP biosynthesis; dUMP from dCTP (dUTP route): step 1/2. Catalyzes the deamination of dCTP to dUTP. The polypeptide is dCTP deaminase (Acinetobacter baylyi (strain ATCC 33305 / BD413 / ADP1)).